We begin with the raw amino-acid sequence, 400 residues long: Enoyl-[acyl-carrier-protein] reductase [NADH] (400 aa).

Residues 48-53 (GSSSGY), 74-75 (FE), 111-112 (DA), and 139-140 (LA) each bind NAD(+). Position 225 (Y225) interacts with substrate. Y235 (proton donor) is an active-site residue. NAD(+) contacts are provided by residues K244 and 273 to 275 (VVT).

It belongs to the TER reductase family. Monomer.

It carries out the reaction a 2,3-saturated acyl-[ACP] + NAD(+) = a (2E)-enoyl-[ACP] + NADH + H(+). Its pathway is lipid metabolism; fatty acid biosynthesis. Its function is as follows. Involved in the final reduction of the elongation cycle of fatty acid synthesis (FAS II). Catalyzes the reduction of a carbon-carbon double bond in an enoyl moiety that is covalently linked to an acyl carrier protein (ACP). In Shewanella loihica (strain ATCC BAA-1088 / PV-4), this protein is Enoyl-[acyl-carrier-protein] reductase [NADH].